The chain runs to 217 residues: Small ribosomal subunit protein uS3 (217 aa).

The 69-residue stretch at 38–106 (IRKFVQKELA…QVHINIIEIK (69 aa)) folds into the KH type-2 domain.

It belongs to the universal ribosomal protein uS3 family. Part of the 30S ribosomal subunit. Forms a tight complex with proteins S10 and S14.

Functionally, binds the lower part of the 30S subunit head. Binds mRNA in the 70S ribosome, positioning it for translation. This Streptococcus sanguinis (strain SK36) protein is Small ribosomal subunit protein uS3.